We begin with the raw amino-acid sequence, 87 residues long: Small ribosomal subunit protein bS20 (87 aa).

The span at 1-19 (MANHKSALKRHRQSIKRNL) shows a compositional bias: basic residues. Residues 1–22 (MANHKSALKRHRQSIKRNLRNN) form a disordered region.

It belongs to the bacterial ribosomal protein bS20 family.

Functionally, binds directly to 16S ribosomal RNA. The sequence is that of Small ribosomal subunit protein bS20 from Maridesulfovibrio salexigens (strain ATCC 14822 / DSM 2638 / NCIMB 8403 / VKM B-1763) (Desulfovibrio salexigens).